The following is a 163-amino-acid chain: Arginine repressor (163 aa).

Belongs to the ArgR family.

The protein localises to the cytoplasm. Its pathway is amino-acid biosynthesis; L-arginine biosynthesis [regulation]. Functionally, regulates arginine biosynthesis genes. The chain is Arginine repressor from Corynebacterium diphtheriae (strain ATCC 700971 / NCTC 13129 / Biotype gravis).